The chain runs to 523 residues: MAFPAPSSSSPRRRGRGLAYLLVSVLLLASRVPGAAGADSEFEDGVSPKFPGCDNPFQKVKVTYWVDGDERSSLTGITARFGEVLPATGSDGDKRKAVVPAPKTGCAKSSAPLASSIAVAERGECTFLEKAKTAESGGAAALLLINDEDDLQKMVCTQNDTVPNIGIPVVMVSQSAGRKILSGMDGGAKVDILMYAPEKPSFDGAIPFLWLMAVGSVACASVWSFVVVGDEDKNAPTLGGEEAADSEIVELQTKTALVFIVTASLVLLFLFFFKSTWSAWLLVVLFCLSGLQGLHYVASTLIVRTCDRCREAKVALPVLGNVTVVTLVILPLALIFVVVWAVHQNSPFAWVGQDLMGICMMILVLQVVHLPNIKVATALLVSAFMYDIFWVFISPFIFKKSVMITVARGSDEGPSLPMVLKMPKEFDTWNGYDMIGFGDILFPGLLVAFSFRYDRANGKDLTDGYFLCLMIGYAFGLSCTYVGLYLMKSGQPALLYLVPSTLGTIVTLGAKRGELSQLWNAKV.

The signal sequence occupies residues 1-35 (MAFPAPSSSSPRRRGRGLAYLLVSVLLLASRVPGA). The Lumenal portion of the chain corresponds to 36 to 207 (AGADSEFEDG…EKPSFDGAIP (172 aa)). Residues 110–182 (SAPLASSIAV…SQSAGRKILS (73 aa)) form the PA domain. An N-linked (GlcNAc...) asparagine glycan is attached at Asn159. A helical transmembrane segment spans residues 208–228 (FLWLMAVGSVACASVWSFVVV). Topologically, residues 229 to 254 (GDEDKNAPTLGGEEAADSEIVELQTK) are cytoplasmic. A helical membrane pass occupies residues 255–272 (TALVFIVTASLVLLFLFF). Over 273–275 (FKS) the chain is Lumenal. A helical membrane pass occupies residues 276 to 298 (TWSAWLLVVLFCLSGLQGLHYVA). Residues 299–321 (STLIVRTCDRCREAKVALPVLGN) lie on the Cytoplasmic side of the membrane. The helical transmembrane segment at 322-342 (VTVVTLVILPLALIFVVVWAV) threads the bilayer. Topologically, residues 343–347 (HQNSP) are lumenal. The chain crosses the membrane as a helical span at residues 348–368 (FAWVGQDLMGICMMILVLQVV). Residues 369–377 (HLPNIKVAT) are Cytoplasmic-facing. Residues 378–398 (ALLVSAFMYDIFWVFISPFIF) form a helical membrane-spanning segment. Residue Asp387 is part of the active site. Residues 399 to 430 (KKSVMITVARGSDEGPSLPMVLKMPKEFDTWN) are Lumenal-facing. A helical membrane pass occupies residues 431-451 (GYDMIGFGDILFPGLLVAFSF). The active site involves Asp439. Residues 452–465 (RYDRANGKDLTDGY) are Cytoplasmic-facing. A helical membrane pass occupies residues 466–486 (FLCLMIGYAFGLSCTYVGLYL). The Lumenal portion of the chain corresponds to 487–489 (MKS). A helical transmembrane segment spans residues 490–510 (GQPALLYLVPSTLGTIVTLGA). The PAL signature appears at 492-494 (PAL). The Cytoplasmic segment spans residues 511 to 523 (KRGELSQLWNAKV).

This sequence belongs to the peptidase A22B family. Post-translationally, glycosylated.

Its subcellular location is the endosome membrane. Its function is as follows. Intramembrane-cleaving aspartic protease (I-CLiP) that cleaves type II membrane signal peptides in the hydrophobic plane of the membrane. In Oryza sativa subsp. japonica (Rice), this protein is Signal peptide peptidase-like 3 (SPPL3).